A 206-amino-acid polypeptide reads, in one-letter code: Ribosomal RNA large subunit methyltransferase E (206 aa).

S-adenosyl-L-methionine contacts are provided by Gly-60, Trp-62, Asp-80, Asp-96, and Asp-121. The active-site Proton acceptor is Lys-161.

The protein belongs to the class I-like SAM-binding methyltransferase superfamily. RNA methyltransferase RlmE family.

Its subcellular location is the cytoplasm. It catalyses the reaction uridine(2552) in 23S rRNA + S-adenosyl-L-methionine = 2'-O-methyluridine(2552) in 23S rRNA + S-adenosyl-L-homocysteine + H(+). In terms of biological role, specifically methylates the uridine in position 2552 of 23S rRNA at the 2'-O position of the ribose in the fully assembled 50S ribosomal subunit. This is Ribosomal RNA large subunit methyltransferase E from Nitrosomonas eutropha (strain DSM 101675 / C91 / Nm57).